Here is a 132-residue protein sequence, read N- to C-terminus: Large-conductance mechanosensitive channel (132 aa).

Helical transmembrane passes span 14 to 34, 38 to 58, and 69 to 89; these read VIDL…VSSL, IITP…LKIT, and FIQT…FVKV.

The protein belongs to the MscL family. In terms of assembly, homopentamer.

It is found in the cell membrane. Functionally, channel that opens in response to stretch forces in the membrane lipid bilayer. May participate in the regulation of osmotic pressure changes within the cell. This is Large-conductance mechanosensitive channel from Bacillus thuringiensis (strain Al Hakam).